The primary structure comprises 37 residues: Cellular retinoic acid-binding protein 2 (37 aa).

Positions 21–31 (KALGVNMMLRK) match the Nuclear localization signal motif.

This sequence belongs to the calycin superfamily. Fatty-acid binding protein (FABP) family. Embryo.

It localises to the cytoplasm. Its subcellular location is the endoplasmic reticulum. It is found in the nucleus. Transports retinoic acid to the nucleus. Regulates the access of retinoic acid to the nuclear retinoic acid receptors. This Gallus gallus (Chicken) protein is Cellular retinoic acid-binding protein 2 (CRABP2).